A 974-amino-acid polypeptide reads, in one-letter code: Localization factor PodJL (974 aa).

Coiled coils occupy residues 81-163 (DEVG…EAAG), 218-320 (VARL…SAQA), and 375-469 (QAQA…LEAA). Disordered regions lie at residues 460–497 (SEAQ…SPFE) and 589–611 (AAAR…KKEK). The segment covering 589 to 598 (AAARAAAASE) has biased composition (low complexity). A helical transmembrane segment spans residues 642 to 662 (ALVVFAAAGALGAGVGGLLLL). 3 Sel1-like repeats span residues 757-793 (PAAQ…NGGD), 794-829 (PRAM…DMGL), and 830-865 (VDSQ…RAGD).

In terms of processing, two isoforms exist, the full-length translation product PodJL and a C-terminal truncated form PodJS. Both appear during a specific time period of the cell cycle to control different aspects of polar organelle development.

Its subcellular location is the membrane. PodJL provides the positional information for the localization of several polar organelles (pili, adhesive holdfast and chemotactic apparatus) by recruiting structural (CpaE) and regulatory (PleC) proteins to a specific cell pole. This Caulobacter vibrioides (strain ATCC 19089 / CIP 103742 / CB 15) (Caulobacter crescentus) protein is Localization factor PodJL (podJ).